The chain runs to 874 residues: Alanine--tRNA ligase (874 aa).

Zn(2+) is bound by residues histidine 564, histidine 568, cysteine 665, and histidine 669.

Belongs to the class-II aminoacyl-tRNA synthetase family. Requires Zn(2+) as cofactor.

It is found in the cytoplasm. It carries out the reaction tRNA(Ala) + L-alanine + ATP = L-alanyl-tRNA(Ala) + AMP + diphosphate. In terms of biological role, catalyzes the attachment of alanine to tRNA(Ala) in a two-step reaction: alanine is first activated by ATP to form Ala-AMP and then transferred to the acceptor end of tRNA(Ala). Also edits incorrectly charged Ser-tRNA(Ala) and Gly-tRNA(Ala) via its editing domain. This is Alanine--tRNA ligase from Burkholderia mallei (strain ATCC 23344).